The following is a 179-amino-acid chain: Acireductone dioxygenase (179 aa).

A disordered region spans residues 1–23 (MVQAWYMDESTADPRMPHRAQPD). Fe(2+) contacts are provided by His-88, His-90, Glu-94, and His-133. Residues His-88, His-90, Glu-94, and His-133 each contribute to the Ni(2+) site.

Belongs to the acireductone dioxygenase (ARD) family. Monomer. Interacts with MMP14. It depends on Fe(2+) as a cofactor. Ni(2+) serves as cofactor. As to expression, detected in prostate, liver, heart, brain, muscle, kidney and seminal vesicles.

It is found in the cytoplasm. Its subcellular location is the nucleus. It localises to the cell membrane. The catalysed reaction is 1,2-dihydroxy-5-(methylsulfanyl)pent-1-en-3-one + O2 = 4-methylsulfanyl-2-oxobutanoate + formate + 2 H(+). The enzyme catalyses 1,2-dihydroxy-5-(methylsulfanyl)pent-1-en-3-one + O2 = 3-(methylsulfanyl)propanoate + CO + formate + 2 H(+). Its pathway is amino-acid biosynthesis; L-methionine biosynthesis via salvage pathway; L-methionine from S-methyl-5-thio-alpha-D-ribose 1-phosphate: step 5/6. Its function is as follows. Catalyzes 2 different reactions between oxygen and the acireductone 1,2-dihydroxy-3-keto-5-methylthiopentene (DHK-MTPene) depending upon the metal bound in the active site. Fe-containing acireductone dioxygenase (Fe-ARD) produces formate and 2-keto-4-methylthiobutyrate (KMTB), the alpha-ketoacid precursor of methionine in the methionine recycle pathway. Ni-containing acireductone dioxygenase (Ni-ARD) produces methylthiopropionate, carbon monoxide and formate, and does not lie on the methionine recycle pathway. Also down-regulates cell migration mediated by MMP14. This Rattus norvegicus (Rat) protein is Acireductone dioxygenase (Adi1).